A 434-amino-acid chain; its full sequence is N-lysine methyltransferase SMYD2-B (434 aa).

The region spanning P8–I242 is the SET domain. S-adenosyl-L-methionine is bound at residue K18–R20. C53, C56, C66, C69, C75, C79, H87, and C91 together coordinate Zn(2+). The MYND-type zinc-finger motif lies at C53–C91. Residues H138, N207–H208, and Y259–F261 contribute to the S-adenosyl-L-methionine site.

The protein belongs to the class V-like SAM-binding methyltransferase superfamily.

Its subcellular location is the cytoplasm. The protein resides in the cytosol. It is found in the nucleus. The enzyme catalyses L-lysyl(4)-[histone H3] + 3 S-adenosyl-L-methionine = N(6),N(6),N(6)-trimethyl-L-lysyl(4)-[histone H3] + 3 S-adenosyl-L-homocysteine + 3 H(+). It catalyses the reaction L-lysyl-[protein] + S-adenosyl-L-methionine = N(6)-methyl-L-lysyl-[protein] + S-adenosyl-L-homocysteine + H(+). Protein-lysine N-methyltransferase that methylates both histones and non-histone proteins, including p53/TP53 and RB1. Specifically trimethylates histone H3 'Lys-4' (H3K4me3) in vivo. The activity requires interaction with HSP90alpha. Shows even higher methyltransferase activity on p53/TP53. Monomethylates 'Lys-370' of p53/TP53, leading to decreased DNA-binding activity and subsequent transcriptional regulation activity of p53/TP53. Monomethylates RB1 at 'Lys-860'. The sequence is that of N-lysine methyltransferase SMYD2-B (smyd2b) from Danio rerio (Zebrafish).